A 344-amino-acid polypeptide reads, in one-letter code: Inositol 2-dehydrogenase/D-chiro-inositol 3-dehydrogenase (344 aa).

It belongs to the Gfo/Idh/MocA family. As to quaternary structure, homotetramer.

It catalyses the reaction myo-inositol + NAD(+) = scyllo-inosose + NADH + H(+). It carries out the reaction 1D-chiro-inositol + NAD(+) = scyllo-inosine + NADH + H(+). Its pathway is polyol metabolism; myo-inositol degradation into acetyl-CoA; acetyl-CoA from myo-inositol: step 1/7. Involved in the oxidation of myo-inositol (MI) and D-chiro-inositol (DCI) to 2-keto-myo-inositol (2KMI or 2-inosose) and 1-keto-D-chiro-inositol (1KDCI), respectively. Can also use D-glucose and D-xylose, and shows a trace of activity with D-ribose and D-fructose. The chain is Inositol 2-dehydrogenase/D-chiro-inositol 3-dehydrogenase (iolG) from Bacillus subtilis (strain 168).